The following is a 352-amino-acid chain: C-C chemokine receptor type 5 (352 aa).

Over 1–30 the chain is Extracellular; sequence MDYQVSSPTYDIDYDTSEPCQKINVKQIAA. Sulfotyrosine is present on Y3. O-linked (GalNAc...) serine glycans are attached at residues S6 and S7. A sulfotyrosine mark is found at Y10 and Y14. Disulfide bonds link C20-C269 and C101-C178. The helical transmembrane segment at 31 to 58 threads the bilayer; that stretch reads RLLPPLYSLVFIFGFVGNMLVILVLINC. At 59-68 the chain is on the cytoplasmic side; sequence KRLKSMTDIY. The helical transmembrane segment at 69-89 threads the bilayer; sequence LLNLAISDLFFLLTVPFWAHY. Topologically, residues 90–102 are extracellular; that stretch reads AAAQWDFGNTMCQ. The chain crosses the membrane as a helical span at residues 103–124; that stretch reads LLTGLYFIGFFSGIFFIILLTI. Residues 125–141 lie on the Cytoplasmic side of the membrane; sequence DRYLAIVHAVFALKART. The chain crosses the membrane as a helical span at residues 142-166; the sequence is VTFGVVTSVITWVVAVFASLPGIIF. The Extracellular portion of the chain corresponds to 167-198; it reads TRSQKEGLHYTCSSHFPYSQYQFWKNFQTLKI. A helical membrane pass occupies residues 199-218; sequence VILGLVLPLLVMVICYSGIL. The Cytoplasmic portion of the chain corresponds to 219–235; the sequence is KTLLRCRNEKKRHRAVR. The helical transmembrane segment at 236–260 threads the bilayer; the sequence is LIFTIMIVYFLFWAPYNIVLLLNTF. Topologically, residues 261 to 277 are extracellular; sequence QEFFGLNNCSSSNRLDQ. A helical transmembrane segment spans residues 278-301; the sequence is AMQVTETLGMTHCCINPIIYAFVG. Over 302–352 the chain is Cytoplasmic; sequence EKFRNYLLVFFQKHIAKHFCKCCSIFQQEAPERASSVYTRSTGEQEISVGL. S-palmitoyl cysteine attachment occurs at residues C321, C323, and C324. A phosphoserine; by BARK1 mark is found at S336, S337, S342, and S349.

It belongs to the G-protein coupled receptor 1 family. As to quaternary structure, interacts with PRAF2. Efficient ligand binding to CCL3/MIP-1alpha and CCL4/MIP-1beta requires sulfation, O-glycosylation and sialic acid modifications. Glycosylation on Ser-6 is required for efficient binding of CCL4. Interacts with GRK2. Interacts with ARRB1 and ARRB2. Interacts with CNIH4. Interacts with S100A4; this interaction stimulates T-lymphocyte chemotaxis. Post-translationally, sulfated on at least 2 of the N-terminal tyrosines. Sulfation is required for efficient binding of the chemokines, CCL3 and CCL4. Palmitoylation in the C-terminal is important for cell surface expression. In terms of processing, phosphorylation on serine residues in the C-terminal is stimulated by binding CC chemokines especially by APO-RANTES. Post-translationally, O-glycosylated, but not N-glycosylated. Ser-6 appears to be the major site even if Ser-7 may be also O-glycosylated. Also sialylated glycans present which contribute to chemokine binding. Thr-16 and Ser-17 may also be glycosylated and, if so, with small moieties such as a T-antigen.

The protein resides in the cell membrane. Functionally, receptor for a number of inflammatory CC-chemokines including CCL3/MIP-1-alpha, CCL4/MIP-1-beta and RANTES and subsequently transduces a signal by increasing the intracellular calcium ion level. May play a role in the control of granulocytic lineage proliferation or differentiation. Participates in T-lymphocyte migration to the infection site by acting as a chemotactic receptor. The protein is C-C chemokine receptor type 5 (CCR5) of Nomascus leucogenys (Northern white-cheeked gibbon).